A 286-amino-acid polypeptide reads, in one-letter code: Shikimate dehydrogenase (NADP(+)) (286 aa).

Residues S22–S24 and T69 each bind shikimate. K73 functions as the Proton acceptor in the catalytic mechanism. An NADP(+)-binding site is contributed by E85. Shikimate-binding residues include N94 and D109. NADP(+) is bound by residues G133 to A137, N157 to K162, and L231. Residue Y233 coordinates shikimate. Residue G254 participates in NADP(+) binding.

The protein belongs to the shikimate dehydrogenase family. As to quaternary structure, homodimer.

The catalysed reaction is shikimate + NADP(+) = 3-dehydroshikimate + NADPH + H(+). The protein operates within metabolic intermediate biosynthesis; chorismate biosynthesis; chorismate from D-erythrose 4-phosphate and phosphoenolpyruvate: step 4/7. Functionally, involved in the biosynthesis of the chorismate, which leads to the biosynthesis of aromatic amino acids. Catalyzes the reversible NADPH linked reduction of 3-dehydroshikimate (DHSA) to yield shikimate (SA). The sequence is that of Shikimate dehydrogenase (NADP(+)) from Alkaliphilus oremlandii (strain OhILAs) (Clostridium oremlandii (strain OhILAs)).